A 306-amino-acid polypeptide reads, in one-letter code: Arylesterase (306 aa).

The Involved in the stabilization of the negatively charged intermediate by the formation of the oxyanion hole motif lies at 82 to 84 (HGG). Catalysis depends on residues Ser156, Asp251, and His281.

Monomer.

The catalysed reaction is a phenyl acetate + H2O = a phenol + acetate + H(+). It carries out the reaction An aryl dialkyl phosphate + H2O = dialkyl phosphate + an aryl alcohol.. Completely inhibited by chemical modifiers that are specific to Cys (HgCl(2) and p-chloromercuribenzoic acid), His (diethyl pyrocarbonate) and Ser (diisopropyl fluorophosphate and phenylmethanesulfonyl fluoride). No significant effect with chemical modifiers specific to Lys (pyridoxal 5'-phosphate) and Arg (phenylglyoxal). Not inhibited by inhibitors of A-esterases (paraoxon) or C-esterases (physostigmine/eserine). Activity is also not effected by incubation with 5 mM divalent cations for 30 minutes at 30 degrees Celsius or with 10 mM EDTA for 60 minutes at 75 degrees Celsius. Functionally, has a broad substrate specificity. Hydrolyzes various p-nitrophenyl phosphates, aromatic esters and p-nitrophenyl fatty acids in vitro. Most active against paraoxon, phenyl acetate and p-nitrophenyl caproate (C6), respectively. Also has tributyrinase activity, but shows no hydrolytic activity toward other triacylglycerols including tricaprylin, trimyristin, tripalmitin or triolein in vitro. The polypeptide is Arylesterase (Saccharolobus solfataricus (Sulfolobus solfataricus)).